The primary structure comprises 407 residues: Putative mannan endo-1,4-beta-mannosidase 9 (407 aa).

The signal sequence occupies residues 1–31 (MGSKRRVILLPTLGVVVLAIAAAVLLHAGEA). Positions 95 and 208 each coordinate substrate. The active-site Proton donor is the E209. Substrate is bound at residue Y284. The Nucleophile role is filled by E324. Position 366 (W366) interacts with substrate.

This sequence belongs to the glycosyl hydrolase 5 (cellulase A) family. Expression not detected.

The protein resides in the secreted. The catalysed reaction is Random hydrolysis of (1-&gt;4)-beta-D-mannosidic linkages in mannans, galactomannans and glucomannans.. This is Putative mannan endo-1,4-beta-mannosidase 9 (MAN9) from Oryza sativa subsp. japonica (Rice).